We begin with the raw amino-acid sequence, 266 residues long: GATA-type zinc finger protein 1 (266 aa).

Disordered stretches follow at residues 1-31, 106-129, and 171-191; these read MEAAQAGDLTRRQELLAPPCLDTESLRKSRP, TQCPNLEISSATSPASLQRRPRKQ, and CSQKLPASPSKALASPGSSEA. Positions 106–121 are enriched in polar residues; the sequence is TQCPNLEISSATSPAS. The segment at 197–221 adopts a GATA-type zinc-finger fold; sequence CASCRTQRTPLWRDAEDGTPLCNAC.

In terms of tissue distribution, specifically expressed in adult testis and ovary. Expressed at high levels in the somatic cells of the developing gonads, including Leydig cells in the testes and granulosa cells in the ovaries.

It is found in the nucleus. Transcriptional regulator that plays a key role in germ cell development. Determines the oogenic fate by activating key genes for the oogenic program and meiotic prophase entry. Acts downstream of bone morphogenetic protein (BMP) by regulating expression of genes required for the oogenic programs, which are repressed by Polycomb activities in sexually uncommitted germ cells. Regulates expression of STRA8, a central downstream effector for the meiotic program. Acts independently of retinoic acid (RA). In males, not required for germ-cell sex determination, but required to allow the spermatogonia to efficiently accomplish the meiotic prophase. In Mus musculus (Mouse), this protein is GATA-type zinc finger protein 1.